Here is a 139-residue protein sequence, read N- to C-terminus: Ribonuclease P protein component (139 aa).

Residues F116–P139 form a disordered region.

Belongs to the RnpA family. As to quaternary structure, consists of a catalytic RNA component (M1 or rnpB) and a protein subunit.

The enzyme catalyses Endonucleolytic cleavage of RNA, removing 5'-extranucleotides from tRNA precursor.. RNaseP catalyzes the removal of the 5'-leader sequence from pre-tRNA to produce the mature 5'-terminus. It can also cleave other RNA substrates such as 4.5S RNA. The protein component plays an auxiliary but essential role in vivo by binding to the 5'-leader sequence and broadening the substrate specificity of the ribozyme. The chain is Ribonuclease P protein component from Chlamydia abortus (strain DSM 27085 / S26/3) (Chlamydophila abortus).